The chain runs to 532 residues: Tyrosine-protein kinase Src-1 (532 aa).

Positions 1–52 (MGATKSKPREGGPRSRSLDIVEGSHQPFTSLSASQTPNKSLDSHRPPAQPFG) are disordered. A lipid anchor (N-myristoyl glycine) is attached at Gly-2. Residues 7–19 (KPREGGPRSRSLD) show a composition bias toward basic and acidic residues. A compositionally biased stretch (polar residues) spans 26–40 (QPFTSLSASQTPNKS). The region spanning 80–141 (GGVTTFVALY…PSNYVAPSDS (62 aa)) is the SH3 domain. The SH2 domain maps to 147 to 244 (WYLGKITRRE…GLCHRLTTVC (98 aa)). The Protein kinase domain occupies 266–519 (LRLELKLGQG…YLQAFLEDYF (254 aa)). ATP contacts are provided by residues 272-280 (LGQGCFGEV) and Lys-294. The Proton acceptor role is filled by Asp-385. Position 415 is a phosphotyrosine; by autocatalysis (Tyr-415).

This sequence belongs to the protein kinase superfamily. Tyr protein kinase family. SRC subfamily.

The protein resides in the cell membrane. The catalysed reaction is L-tyrosyl-[protein] + ATP = O-phospho-L-tyrosyl-[protein] + ADP + H(+). The protein is Tyrosine-protein kinase Src-1 (src-a) of Xenopus laevis (African clawed frog).